The sequence spans 486 residues: Membrane-bound lytic murein transglycosylase F (486 aa).

A signal peptide spans 1-21 (MTRIKLSYFTIGLVALLLALA). The non-LT domain stretch occupies residues 22–268 (LWPNIPWRNG…RLEEKYLGHV (247 aa)). Residues 269–486 (GSFDYVDTKT…VVGPGWSIGD (218 aa)) form an LT domain region. The active site involves Glu-313.

This sequence in the N-terminal section; belongs to the bacterial solute-binding protein 3 family. It in the C-terminal section; belongs to the transglycosylase Slt family.

Its subcellular location is the cell outer membrane. The catalysed reaction is Exolytic cleavage of the (1-&gt;4)-beta-glycosidic linkage between N-acetylmuramic acid (MurNAc) and N-acetylglucosamine (GlcNAc) residues in peptidoglycan, from either the reducing or the non-reducing ends of the peptidoglycan chains, with concomitant formation of a 1,6-anhydrobond in the MurNAc residue.. Murein-degrading enzyme that degrades murein glycan strands and insoluble, high-molecular weight murein sacculi, with the concomitant formation of a 1,6-anhydromuramoyl product. Lytic transglycosylases (LTs) play an integral role in the metabolism of the peptidoglycan (PG) sacculus. Their lytic action creates space within the PG sacculus to allow for its expansion as well as for the insertion of various structures such as secretion systems and flagella. The chain is Membrane-bound lytic murein transglycosylase F from Yersinia pestis bv. Antiqua (strain Antiqua).